A 92-amino-acid polypeptide reads, in one-letter code: uncharacterized protein (92 aa).

Residues 1-10 (MGLLKKKDST) are compositionally biased toward basic and acidic residues. Positions 1-21 (MGLLKKKDSTSARSSTSPCAD) are disordered. The CHCH domain occupies 16–66 (TSPCADLRNAYHNCFNKWYSEKFVKGQWDKEECVAEWKKYRDCLSENLDGK). 2 short sequence motifs (cx9C motif) span residues 19 to 29 (CADLRNAYHNC) and 48 to 58 (CVAEWKKYRDC). Intrachain disulfides connect cysteine 19–cysteine 58 and cysteine 29–cysteine 48.

It belongs to the TRIAP1/MDM35 family.

This is an uncharacterized protein from Arabidopsis thaliana (Mouse-ear cress).